Here is a 301-residue protein sequence, read N- to C-terminus: Tegument protein VP22 (301 aa).

The tract at residues 1–171 (MTSRRSVKSG…PTRSKTPAQG (171 aa)) is disordered. The span at 113 to 124 (RTPTTAPRAPRT) shows a compositional bias: low complexity. The Nuclear localization signal motif lies at 163–166 (TRSK). The interval 174–267 (RKLHFSTAPP…LVNPDVVQDV (94 aa)) is interaction with gE. The Nuclear export signal motif lies at 232 to 244 (LNELLGITTIRVT). The span at 269–281 (AATATRGRSAASR) shows a compositional bias: low complexity. Residues 269–301 (AATATRGRSAASRPTERPRAPARSASRPRRPVE) form a disordered region.

It belongs to the alphaherpesvirinae VP22 tegument protein family. Interacts with gE (via C-terminus); this interaction is necessary for the recruitment of VP22 to the Golgi and its packaging into virions. Interacts with gM (via C-terminus). Interacts with VP16; this interaction allows the formation of a tripartite complex composed of VP16, VP22 and UL41/VHS. According to a report interacts with gD (via C-terminus). According another publication, does not interact with gD. Interacts with host CGAS. Interacts with host SET; this interaction may interfere with SET-mediated nucleosomal deposition onto the viral genome. Interacts with the capsid-binding protein UL16. In terms of processing, highly phosphorylated in the host cell. Packaging is selective for underphosphorylated forms.

Its subcellular location is the virion tegument. The protein resides in the host cytoplasm. It localises to the host nucleus. The protein localises to the host Golgi apparatus. Tegument protein that plays different roles during the time course of infection. Participates in both the accumulation of viral mRNAs and viral protein translation at late time of infection. Modulates the RNase activity of the virion host shutoff protein UL41 probably to ensure necessary levels of key cellular mRNAs and proteins. Plays a role in microtubule reorganization that occurs after viral infection by stabilizing microtubule network. Finally, may prevent nucleosomal deposition onto the viral genome by interacting with and inhibiting host SET. Plays a role in the inhibition of host innate immune system by targeting the CGAS enzymatic activity which is the principal cytosolic DNA sensor that detects invading viral DNA. Acts by mediating disruption of liquid-like droplets in which CGAS is activated, thereby preventing CGAS activity. In Human herpesvirus 1 (strain 17) (HHV-1), this protein is Tegument protein VP22.